The chain runs to 494 residues: Serine/threonine-protein kinase cst-1 (494 aa).

Residues 1–27 (MPPSTDSSRRNSEEGFSDGFKLDSSAL) are disordered. A Protein kinase domain is found at 35-286 (FDIVGKLGEG…ALRLCEHTFI (252 aa)). Residues 41–49 (LGEGSYGSV) and lysine 64 each bind ATP. Aspartate 154 serves as the catalytic Proton acceptor. The segment at 364-413 (IPKSAYGSSRNNGSPRVQPPGHTASACDPSNNPPFAEEGTGPNFQIGTSE) is disordered. Positions 369 to 378 (YGSSRNNGSP) are enriched in polar residues. The 48-residue stretch at 443-490 (FEFLRNITLDELIRRKESLDSEMEEEIRELQRRYKTKRQPILDVIEIK) folds into the SARAH domain.

Belongs to the protein kinase superfamily. STE Ser/Thr protein kinase family. STE20 subfamily. Mg(2+) serves as cofactor. Proteolytically cleaved by caspase-3 during apoptosis which results in kinase activation.

The enzyme catalyses L-seryl-[protein] + ATP = O-phospho-L-seryl-[protein] + ADP + H(+). It carries out the reaction L-threonyl-[protein] + ATP = O-phospho-L-threonyl-[protein] + ADP + H(+). In terms of biological role, serine/threonine-protein kinase which extends lifespan and delays tissue aging, probably by activating daf-16. The protein is Serine/threonine-protein kinase cst-1 (cst-1) of Caenorhabditis briggsae.